The sequence spans 389 residues: Tryptophan synthase beta chain (389 aa).

Lys-84 is modified (N6-(pyridoxal phosphate)lysine).

The protein belongs to the TrpB family. In terms of assembly, tetramer of two alpha and two beta chains. Pyridoxal 5'-phosphate is required as a cofactor.

It catalyses the reaction (1S,2R)-1-C-(indol-3-yl)glycerol 3-phosphate + L-serine = D-glyceraldehyde 3-phosphate + L-tryptophan + H2O. Its pathway is amino-acid biosynthesis; L-tryptophan biosynthesis; L-tryptophan from chorismate: step 5/5. In terms of biological role, the beta subunit is responsible for the synthesis of L-tryptophan from indole and L-serine. The polypeptide is Tryptophan synthase beta chain (Clostridium novyi (strain NT)).